Here is a 243-residue protein sequence, read N- to C-terminus: NADH-ubiquinone oxidoreductase chain 6 (243 aa).

A run of 5 helical transmembrane segments spans residues 16-36 (ISSVLDIISILAIFCGISVIV), 41-61 (IISVLFLIGLFASVSSYLILL), 69-89 (AYLIVYIGAISILFLFILMLI), 104-124 (IPLTIILGISLSYSLFQLLPY), and 201-221 (IWLFLASFILLLAMVGSIVII).

This sequence belongs to the complex I subunit 6 family.

It localises to the mitochondrion membrane. It catalyses the reaction a ubiquinone + NADH + 5 H(+)(in) = a ubiquinol + NAD(+) + 4 H(+)(out). Functionally, core subunit of the mitochondrial membrane respiratory chain NADH dehydrogenase (Complex I) that is believed to belong to the minimal assembly required for catalysis. Complex I functions in the transfer of electrons from NADH to the respiratory chain. The immediate electron acceptor for the enzyme is believed to be ubiquinone. This chain is NADH-ubiquinone oxidoreductase chain 6 (ndh-6), found in Neurospora crassa (strain ATCC 24698 / 74-OR23-1A / CBS 708.71 / DSM 1257 / FGSC 987).